The following is a 422-amino-acid chain: Histidine--tRNA ligase (422 aa).

Belongs to the class-II aminoacyl-tRNA synthetase family. Homodimer.

Its subcellular location is the cytoplasm. The enzyme catalyses tRNA(His) + L-histidine + ATP = L-histidyl-tRNA(His) + AMP + diphosphate + H(+). This is Histidine--tRNA ligase from Vibrio atlanticus (strain LGP32) (Vibrio splendidus (strain Mel32)).